The following is a 197-amino-acid chain: Large ribosomal subunit protein eL15 (197 aa).

A disordered region spans residues 175-197; it reads LRTGRKGSSKSRPSIRANGRLRR.

It belongs to the eukaryotic ribosomal protein eL15 family.

The chain is Large ribosomal subunit protein eL15 (rpl15e) from Thermoplasma volcanium (strain ATCC 51530 / DSM 4299 / JCM 9571 / NBRC 15438 / GSS1).